Here is a 146-residue protein sequence, read N- to C-terminus: Ribonuclease H (146 aa).

In terms of domain architecture, RNase H type-1 spans 1–143; sequence MKKQVTIYTD…CDQLAREAIK (143 aa). Mg(2+) contacts are provided by Asp10, Glu48, Asp70, and Asp135.

The protein belongs to the RNase H family. In terms of assembly, monomer. Requires Mg(2+) as cofactor.

The protein localises to the cytoplasm. It catalyses the reaction Endonucleolytic cleavage to 5'-phosphomonoester.. Endonuclease that specifically degrades the RNA of RNA-DNA hybrids. This Chlorobium chlorochromatii (strain CaD3) protein is Ribonuclease H.